Reading from the N-terminus, the 1052-residue chain is SE-cephalotoxin (1052 aa).

The N-terminal stretch at 1–21 (MMGTSRCVILLFALLLWAANA) is a signal peptide. The propeptide occupies 22-29 (APPEIHTT). The N-linked (GlcNAc...) asparagine glycan is linked to asparagine 41. The stretch at 130–194 (TGVNRKLDQI…DMNKRRLMAE (65 aa)) forms a coiled coil. An N-linked (GlcNAc...) asparagine glycan is attached at asparagine 353. The 38-residue stretch at 460 to 497 (PGNPCNHGCNGHGECKVVPYTDQFQCFCHGNYEGKMCQ) folds into the EGF-like domain. 3 cysteine pairs are disulfide-bonded: cysteine 464–cysteine 474, cysteine 468–cysteine 485, and cysteine 487–cysteine 496. N-linked (GlcNAc...) asparagine glycosylation is found at asparagine 576 and asparagine 715. One can recognise a Sushi domain in the interval 709-769 (TSCPPLNVTH…QWSATPKCES (61 aa)). 7 disulfides stabilise this stretch: cysteine 711/cysteine 752, cysteine 739/cysteine 767, cysteine 780/cysteine 814, cysteine 784/cysteine 820, cysteine 795/cysteine 804, cysteine 829/cysteine 847, and cysteine 841/cysteine 858. The 54-residue stretch at 768–821 (ESSWSRWSKWSACASTCGNATQSRRRRCLGQSESEKCIGPSKQVRKCFVEDCCQ) folds into the TSP type-1 domain. Asparagine 786 is a glycosylation site (N-linked (GlcNAc...) asparagine). An LDL-receptor class A domain is found at 819–859 (CCQEKYGKFKCDNNKCISLSRVCDGNDDCRNAEDESKSRCK).

Monomer. Expressed by the salivary gland.

The protein resides in the secreted. This is SE-cephalotoxin from Acanthosepion esculentum (Golden cuttlefish).